The chain runs to 335 residues: GTPase Obg (335 aa).

The region spanning 1–158 is the Obg domain; sequence MFVDQITLEL…RLVELELKLI (158 aa). An OBG-type G domain is found at 159-334; the sequence is ADIGLVGFPN…LYDLFKSKLS (176 aa). GTP contacts are provided by residues 165-172, 190-194, 215-218, 285-288, and 315-317; these read GFPNAGKS, FTTLH, DIPG, NKID, and SGL. Residues S172 and T192 each coordinate Mg(2+).

Belongs to the TRAFAC class OBG-HflX-like GTPase superfamily. OBG GTPase family. Monomer. Mg(2+) serves as cofactor.

It localises to the cytoplasm. Functionally, an essential GTPase which binds GTP, GDP and possibly (p)ppGpp with moderate affinity, with high nucleotide exchange rates and a fairly low GTP hydrolysis rate. Plays a role in control of the cell cycle, stress response, ribosome biogenesis and in those bacteria that undergo differentiation, in morphogenesis control. This is GTPase Obg from Chlamydia trachomatis serovar L2 (strain ATCC VR-902B / DSM 19102 / 434/Bu).